We begin with the raw amino-acid sequence, 131 residues long: Antitoxin MqsA (131 aa).

Cys3, Cys6, Cys37, and Cys40 together coordinate Zn(2+). The HTH cro/C1-type domain occupies Ile74–Leu127. Positions Gln85–Lys104 form a DNA-binding region, H-T-H motif.

In terms of assembly, homodimer. Crystallizes as a heterotetramer with MqsA, MqsR-MqsA(2)-MqsR. Purifies as a probable heterohexamer of 2 MqsR dimers and 1 MqsA dimer. Binds promoter DNA as a dimer. When the 2 dissociate the MsqR mRNA interferase becomes active. Zn(2+) is required as a cofactor. Post-translationally, degraded in the presence of oxidative stress, maybe by the Lon and/or ClpX proteases.

Functionally, antitoxin component of a type II toxin-antitoxin (TA) system. Labile antitoxin that binds to the MqsR mRNA interferase toxin and neutralizes its endoribonuclease activity. Overexpression prevents MqsR-mediated cessation of cell growth and inhibition of cell proliferation. Initially reported to act as a cotranscription factor with MqsA. Following further experiments, the MqsR-MqsA complex does not bind DNA and all reported data are actually due to a small fraction of free MqsA alone binding DNA. Addition of MqsR to a preformed MqsA-promoter DNA complex causes dissociation of the MqsA-DNA complex, probably causing derepression of MqsA-repressed transcripts. MqsA binds to 2 palindromes in the promoter region of the mqsRA operon activating its transcription. Binds to other promoters, inducing mcbR and spy and repressing cspD among others. Binds to and represses the rpoS promoter, the master stress regulator, resulting in decreased cyclic-di-GMP, reduced stress resistance, increased cell motility and decreased biofilm formation; in these experiments 5 TA systems are missing (lacks MazEF, RelEB, ChpB, YoeB-YefM, YafQ-DinJ). An earlier study showed overexpression alone increases biofilm formation, perhaps by repressing cspD; in these experiments the 5 TA systems are present. Represses the csgD promoter. In the presence of stress, when this protein is degraded, the promoters it represses are derepressed, leading to biofilm formation. This TA system mediates cell growth during bile acid deoxycholate stress by degrading mRNA for probable deoxycholate-binding protein YgiS; bile acid detergents such as deoxycholate are important for host defense against bacterial growth in the gall bladder and duodenum. In Escherichia coli (strain K12), this protein is Antitoxin MqsA.